The primary structure comprises 153 residues: MATVLDTPVAVRRAAMDLLARREHGRAELSRKLRQRGASAELIDPALDRLAEEGLLDESRYLESFIASRARSGHGPLRIREELAQRGLPRADIERALGACEVDWSAQLREVWRRKFARLPQDAREKAQQGRFLAYRGYSMESISRLLNSRSDD.

The protein belongs to the RecX family.

It localises to the cytoplasm. Its function is as follows. Modulates RecA activity. The protein is Regulatory protein RecX of Pseudomonas aeruginosa (strain UCBPP-PA14).